The sequence spans 334 residues: Ornithine carbamoyltransferase (334 aa).

Residues 57–60, Q84, R108, and 135–138 contribute to the carbamoyl phosphate site; these read STRT and HPTQ. Residues N169, D233, and 237–238 contribute to the L-ornithine site; that span reads SM. Residues 275–276 and R320 contribute to the carbamoyl phosphate site; that span reads CL.

This sequence belongs to the aspartate/ornithine carbamoyltransferase superfamily. OTCase family.

It is found in the cytoplasm. It catalyses the reaction carbamoyl phosphate + L-ornithine = L-citrulline + phosphate + H(+). Its pathway is amino-acid biosynthesis; L-arginine biosynthesis; L-arginine from L-ornithine and carbamoyl phosphate: step 1/3. In terms of biological role, reversibly catalyzes the transfer of the carbamoyl group from carbamoyl phosphate (CP) to the N(epsilon) atom of ornithine (ORN) to produce L-citrulline. In Aeromonas hydrophila subsp. hydrophila (strain ATCC 7966 / DSM 30187 / BCRC 13018 / CCUG 14551 / JCM 1027 / KCTC 2358 / NCIMB 9240 / NCTC 8049), this protein is Ornithine carbamoyltransferase.